A 533-amino-acid chain; its full sequence is Berberine bridge enzyme-like 28 (533 aa).

Residues 1–23 form the signal peptide; that stretch reads MEFSSFLFTILLFSLNISPLVSA. Cysteine 34 and cysteine 96 form a disulfide bridge. Positions 74 to 249 constitute an FAD-binding PCMH-type domain; the sequence is ETPKPVSIIT…LSWKVKLVDV (176 aa). Histidine 111 carries the pros-8alpha-FAD histidine modification. N-linked (GlcNAc...) asparagine glycans are attached at residues asparagine 142 and asparagine 440.

The protein belongs to the oxygen-dependent FAD-linked oxidoreductase family. FAD is required as a cofactor.

It localises to the secreted. Its subcellular location is the cell wall. Involved in adaptation to salt stress. The sequence is that of Berberine bridge enzyme-like 28 from Arabidopsis thaliana (Mouse-ear cress).